A 126-amino-acid polypeptide reads, in one-letter code: Fluoride-specific ion channel FluC 2 (126 aa).

Helical transmembrane passes span 5-25 (TALTVAIWIGVMLIGGIGSVL), 44-64 (GTLTVNITGAALLGFLAGLAL), 68-88 (AALLAGTGFVGAYTTFSTWML), and 99-119 (MVSALANIVVSVVLGLAAALL). Na(+) is bound by residues G78 and T81.

The protein belongs to the fluoride channel Fluc/FEX (TC 1.A.43) family.

Its subcellular location is the cell membrane. The enzyme catalyses fluoride(in) = fluoride(out). With respect to regulation, na(+) is not transported, but it plays an essential structural role and its presence is essential for fluoride channel function. Fluoride-specific ion channel. Important for reducing fluoride concentration in the cell, thus reducing its toxicity. This Mycobacterium bovis (strain ATCC BAA-935 / AF2122/97) protein is Fluoride-specific ion channel FluC 2.